Consider the following 401-residue polypeptide: Argininosuccinate synthase (401 aa).

9–17 provides a ligand contact to ATP; sequence AYSGGLDTS. Residue Tyr-88 coordinates L-citrulline. Gly-118 is a binding site for ATP. L-aspartate-binding residues include Thr-120, Asn-124, and Asp-125. Asn-124 is an L-citrulline binding site. L-citrulline contacts are provided by Arg-128, Ser-177, Ser-186, Glu-262, and Tyr-274.

The protein belongs to the argininosuccinate synthase family. Type 1 subfamily. Homotetramer.

It is found in the cytoplasm. It carries out the reaction L-citrulline + L-aspartate + ATP = 2-(N(omega)-L-arginino)succinate + AMP + diphosphate + H(+). Its pathway is amino-acid biosynthesis; L-arginine biosynthesis; L-arginine from L-ornithine and carbamoyl phosphate: step 2/3. The chain is Argininosuccinate synthase from Chlorobaculum parvum (strain DSM 263 / NCIMB 8327) (Chlorobium vibrioforme subsp. thiosulfatophilum).